The chain runs to 141 residues: uncharacterized protein (141 aa).

One can recognise a Ferritin-like diiron domain in the interval 13–141 (VTKGTELEKE…LKGILDRYFK (129 aa)). Positions 63, 66, 125, and 128 each coordinate Fe cation.

This is an uncharacterized protein from Methanocaldococcus jannaschii (strain ATCC 43067 / DSM 2661 / JAL-1 / JCM 10045 / NBRC 100440) (Methanococcus jannaschii).